The following is a 504-amino-acid chain: GTPase Der (504 aa).

Residues P4–M168 form the EngA-type G 1 domain. GTP is bound by residues G10 to S17, D57 to I61, and N120 to D123. Positions M168–E179 are enriched in basic and acidic residues. Residues M168–F191 form a disordered region. Positions E180 to F191 are enriched in acidic residues. The EngA-type G 2 domain maps to I216 to T389. Residues G222–S229, D269–V273, and N334–D337 contribute to the GTP site. One can recognise a KH-like domain in the interval Q390–S474.

Belongs to the TRAFAC class TrmE-Era-EngA-EngB-Septin-like GTPase superfamily. EngA (Der) GTPase family. As to quaternary structure, associates with the 50S ribosomal subunit.

Its function is as follows. GTPase that plays an essential role in the late steps of ribosome biogenesis. This is GTPase Der from Haemophilus influenzae (strain ATCC 51907 / DSM 11121 / KW20 / Rd).